Consider the following 788-residue polypeptide: Ribonucleoside-diphosphate reductase subunit alpha (788 aa).

The ATP-cone domain maps to 2-92 (ITVVKRNGRI…LYDLYHKVSG (91 aa)). ATP-binding positions include Lys6, 12–18 (EPLDITK), and Thr52. A GDP-binding site is contributed by Thr200. The cysteines at positions 216 and 497 are disulfide-linked. DTTP contacts are provided by residues 223-225 (DNI) and Arg253. Asn424 is a GDP binding site. Residue Asn424 is the Proton acceptor of the active site. The Cysteine radical intermediate role is filled by Cys426. GDP-binding positions include Glu428 and 661–663 (SSI). Catalysis depends on Glu428, which acts as the Proton acceptor.

Belongs to the ribonucleoside diphosphate reductase large chain family. As to quaternary structure, tetramer of two alpha and two beta subunits.

The enzyme catalyses a 2'-deoxyribonucleoside 5'-diphosphate + [thioredoxin]-disulfide + H2O = a ribonucleoside 5'-diphosphate + [thioredoxin]-dithiol. Its activity is regulated as follows. Under complex allosteric control mediated by deoxynucleoside triphosphates and ATP binding to separate specificity and activation sites on the alpha subunit. The type of nucleotide bound at the specificity site determines substrate preference. It seems probable that ATP makes the enzyme reduce CDP and UDP, dGTP favors ADP reduction and dTTP favors GDP reduction. Stimulated by ATP and inhibited by dATP binding to the activity site. Provides the precursors necessary for DNA synthesis. Catalyzes the biosynthesis of deoxyribonucleotides from the corresponding ribonucleotides. The sequence is that of Ribonucleoside-diphosphate reductase subunit alpha (nrdA) from Helicobacter pylori (strain ATCC 700392 / 26695) (Campylobacter pylori).